A 196-amino-acid polypeptide reads, in one-letter code: Probable DNA-directed RNA polymerase subunit delta (196 aa).

Residues leucine 14–tryptophan 81 enclose the HTH HARE-type domain. Positions aspartate 119–glycine 150 are enriched in acidic residues. The segment at aspartate 119 to aspartate 196 is disordered. The segment covering serine 151 to leucine 161 has biased composition (basic and acidic residues). 2 stretches are compositionally biased toward acidic residues: residues aspartate 162–aspartate 176 and serine 186–aspartate 196.

The protein belongs to the RpoE family. As to quaternary structure, RNAP is composed of a core of 2 alpha, a beta and a beta' subunits. The core is associated with a delta subunit and one of several sigma factors.

In terms of biological role, participates in both the initiation and recycling phases of transcription. In the presence of the delta subunit, RNAP displays an increased specificity of transcription, a decreased affinity for nucleic acids, and an increased efficiency of RNA synthesis because of enhanced recycling. The chain is Probable DNA-directed RNA polymerase subunit delta from Ligilactobacillus salivarius (strain UCC118) (Lactobacillus salivarius).